The chain runs to 244 residues: Carboxy-S-adenosyl-L-methionine synthase (244 aa).

Residues Tyr-40, 65–67 (GCS), 90–91 (DN), 119–120 (DL), Asn-134, and Arg-201 each bind S-adenosyl-L-methionine.

Belongs to the class I-like SAM-binding methyltransferase superfamily. Cx-SAM synthase family. In terms of assembly, homodimer.

It carries out the reaction prephenate + S-adenosyl-L-methionine = carboxy-S-adenosyl-L-methionine + 3-phenylpyruvate + H2O. In terms of biological role, catalyzes the conversion of S-adenosyl-L-methionine (SAM) to carboxy-S-adenosyl-L-methionine (Cx-SAM). This Trichlorobacter lovleyi (strain ATCC BAA-1151 / DSM 17278 / SZ) (Geobacter lovleyi) protein is Carboxy-S-adenosyl-L-methionine synthase.